Here is a 111-residue protein sequence, read N- to C-terminus: Shuttling pre-60S factor C23B6.02c (111 aa).

2 stretches are compositionally biased toward basic residues: residues 1–12 (MAKKQSIRSRNF) and 59–73 (SKKK…KKAK). Disordered stretches follow at residues 1–25 (MAKK…DSST) and 47–111 (ALRS…QGDE). The segment covering 83-111 (QAREERLDTKISKSLQKQEKLKARKQGDE) has biased composition (basic and acidic residues).

The protein belongs to the ECM1 family. As to quaternary structure, associates with the pre-60S ribosomal particle and the nucleopore complex.

The protein localises to the nucleus. Its subcellular location is the nucleolus. It localises to the cytoplasm. In terms of biological role, pre-ribosomal factor involved in 60S ribosomal protein subunit export from the nucleus. The polypeptide is Shuttling pre-60S factor C23B6.02c (Schizosaccharomyces pombe (strain 972 / ATCC 24843) (Fission yeast)).